The sequence spans 182 residues: Small ribosomal subunit protein uS4c (182 aa).

The region spanning 82 to 143 (MRLDNILFRL…KERSKVLIQN (62 aa)) is the S4 RNA-binding domain.

Belongs to the universal ribosomal protein uS4 family. Part of the 30S ribosomal subunit. Contacts protein S5. The interaction surface between S4 and S5 is involved in control of translational fidelity.

It localises to the plastid. The protein resides in the chloroplast. Functionally, one of the primary rRNA binding proteins, it binds directly to 16S rRNA where it nucleates assembly of the body of the 30S subunit. Its function is as follows. With S5 and S12 plays an important role in translational accuracy. The sequence is that of Small ribosomal subunit protein uS4c (rps4) from Tigridia sp. (strain Lejeune 1997).